A 66-amino-acid chain; its full sequence is MSDDIVNVTCPTCGKAVEWSPTSPFRPFCSKRCQLIDLGEWAEEEKRIPSDVQITDSDEWSDETRY.

Zn(2+) is bound by residues Cys10, Cys13, Cys29, and Cys33. A disordered region spans residues 46–66 (KRIPSDVQITDSDEWSDETRY). Acidic residues predominate over residues 56–66 (DSDEWSDETRY).

Belongs to the DNA gyrase inhibitor YacG family. In terms of assembly, interacts with GyrB. Zn(2+) serves as cofactor.

Inhibits all the catalytic activities of DNA gyrase by preventing its interaction with DNA. Acts by binding directly to the C-terminal domain of GyrB, which probably disrupts DNA binding by the gyrase. The chain is DNA gyrase inhibitor YacG from Sodalis glossinidius (strain morsitans).